Reading from the N-terminus, the 372-residue chain is Uroporphyrinogen decarboxylase (372 aa).

Substrate is bound by residues 35–39 (RQAGR), aspartate 85, tyrosine 166, serine 221, and histidine 342.

This sequence belongs to the uroporphyrinogen decarboxylase family. Homodimer.

The protein localises to the cytoplasm. The catalysed reaction is uroporphyrinogen III + 4 H(+) = coproporphyrinogen III + 4 CO2. Its pathway is porphyrin-containing compound metabolism; protoporphyrin-IX biosynthesis; coproporphyrinogen-III from 5-aminolevulinate: step 4/4. Functionally, catalyzes the decarboxylation of four acetate groups of uroporphyrinogen-III to yield coproporphyrinogen-III. This Methylibium petroleiphilum (strain ATCC BAA-1232 / LMG 22953 / PM1) protein is Uroporphyrinogen decarboxylase.